The chain runs to 194 residues: 7-methyl-GTP pyrophosphatase (194 aa).

Asp-69 functions as the Proton acceptor in the catalytic mechanism.

This sequence belongs to the Maf family. YceF subfamily. A divalent metal cation serves as cofactor.

Its subcellular location is the cytoplasm. The catalysed reaction is N(7)-methyl-GTP + H2O = N(7)-methyl-GMP + diphosphate + H(+). In terms of biological role, nucleoside triphosphate pyrophosphatase that hydrolyzes 7-methyl-GTP (m(7)GTP). May have a dual role in cell division arrest and in preventing the incorporation of modified nucleotides into cellular nucleic acids. In Salmonella paratyphi A (strain ATCC 9150 / SARB42), this protein is 7-methyl-GTP pyrophosphatase (yceF1).